We begin with the raw amino-acid sequence, 359 residues long: MRQILVAVTVALVVSILLTPALIRLFTRHGFGQEIREDGPPSHHNKRGTPSMGGVAIVAGIWAGYLGTHLAGLAFDGEGVSASGVLVLGLATALGGVGFLDDLIKIRRSRNLGLNKTAKTVGQITAAVLFGVLVLQFRNGAGLTPASADLSYVREIATVTLAPALFVLFCMVIVSAWSNAVNFTDGLDGLAAGSMAMVTAAYVLITFWQYRNACVTAPGLGCYNVRDPLDLTLIAAATVGACIGFLWWNAAPAKIFMGDTGSLALGGVIAGLSVTSRTEILAVVLGSLFVAEITSVVLQILAFRTTGRRVFRMAPFHHHFELAGWAETTVIIRFWLLTAIACGLGVVLFYGEWLATIGA.

10 helical membrane passes run 3–23, 55–75, 80–100, 117–137, 156–176, 187–207, 231–251, 255–275, 280–300, and 334–354; these read QILV…PALI, VAIV…GLAF, VSAS…VGFL, TAKT…VLQF, IATV…IVSA, LDGL…LITF, LTLI…WNAA, IFMG…LSVT, ILAV…VLQI, and FWLL…GEWL.

This sequence belongs to the glycosyltransferase 4 family. MraY subfamily. Mg(2+) serves as cofactor.

The protein localises to the cell membrane. It carries out the reaction UDP-N-acetyl-alpha-D-muramoyl-L-alanyl-gamma-D-glutamyl-meso-2,6-diaminopimeloyl-D-alanyl-D-alanine + di-trans,octa-cis-undecaprenyl phosphate = di-trans,octa-cis-undecaprenyl diphospho-N-acetyl-alpha-D-muramoyl-L-alanyl-D-glutamyl-meso-2,6-diaminopimeloyl-D-alanyl-D-alanine + UMP. Its pathway is cell wall biogenesis; peptidoglycan biosynthesis. In terms of biological role, catalyzes the initial step of the lipid cycle reactions in the biosynthesis of the cell wall peptidoglycan: transfers peptidoglycan precursor phospho-MurNAc-pentapeptide from UDP-MurNAc-pentapeptide onto the lipid carrier undecaprenyl phosphate, yielding undecaprenyl-pyrophosphoryl-MurNAc-pentapeptide, known as lipid I. The chain is Phospho-N-acetylmuramoyl-pentapeptide-transferase from Mycobacterium leprae (strain TN).